We begin with the raw amino-acid sequence, 396 residues long: Sialyltransferase-like protein 2 (396 aa).

The Cytoplasmic segment spans residues 1–6; it reads MKRRHL. The chain crosses the membrane as a helical; Signal-anchor for type II membrane protein span at residues 7–23; the sequence is PPVLVLLLLSILSLSFR. The Lumenal segment spans residues 24–396; it reads RRLLVLQGPP…FTVPPVRLHR (373 aa). Residues asparagine 72, asparagine 260, and asparagine 304 are each glycosylated (N-linked (GlcNAc...) asparagine).

It belongs to the glycosyltransferase 29 family.

The protein localises to the golgi apparatus membrane. Functionally, does not possess sialyltransferase-like activity in vitro. The protein is Sialyltransferase-like protein 2 of Oryza sativa subsp. indica (Rice).